We begin with the raw amino-acid sequence, 159 residues long: NADH-quinone oxidoreductase subunit B (159 aa).

Positions 32, 33, 97, and 126 each coordinate [4Fe-4S] cluster.

Belongs to the complex I 20 kDa subunit family. As to quaternary structure, NDH-1 is composed of 14 different subunits. Subunits NuoB, C, D, E, F, and G constitute the peripheral sector of the complex. It depends on [4Fe-4S] cluster as a cofactor.

Its subcellular location is the cell inner membrane. The enzyme catalyses a quinone + NADH + 5 H(+)(in) = a quinol + NAD(+) + 4 H(+)(out). In terms of biological role, NDH-1 shuttles electrons from NADH, via FMN and iron-sulfur (Fe-S) centers, to quinones in the respiratory chain. The immediate electron acceptor for the enzyme in this species is believed to be ubiquinone. Couples the redox reaction to proton translocation (for every two electrons transferred, four hydrogen ions are translocated across the cytoplasmic membrane), and thus conserves the redox energy in a proton gradient. The sequence is that of NADH-quinone oxidoreductase subunit B from Helicobacter pylori (strain HPAG1).